The primary structure comprises 327 residues: Ferredoxin--NADP reductase (327 aa).

FAD-binding residues include Thr-18, Asp-37, Gln-45, Tyr-50, Ala-90, Phe-124, Asp-283, and Ser-324.

It belongs to the ferredoxin--NADP reductase type 2 family. As to quaternary structure, homodimer. It depends on FAD as a cofactor.

The enzyme catalyses 2 reduced [2Fe-2S]-[ferredoxin] + NADP(+) + H(+) = 2 oxidized [2Fe-2S]-[ferredoxin] + NADPH. This is Ferredoxin--NADP reductase from Saccharopolyspora erythraea (strain ATCC 11635 / DSM 40517 / JCM 4748 / NBRC 13426 / NCIMB 8594 / NRRL 2338).